The following is a 689-amino-acid chain: Glycine--tRNA ligase beta subunit (689 aa).

The protein belongs to the class-II aminoacyl-tRNA synthetase family. As to quaternary structure, tetramer of two alpha and two beta subunits.

It is found in the cytoplasm. It carries out the reaction tRNA(Gly) + glycine + ATP = glycyl-tRNA(Gly) + AMP + diphosphate. This chain is Glycine--tRNA ligase beta subunit, found in Salmonella paratyphi C (strain RKS4594).